The sequence spans 515 residues: Fibril protein (515 aa).

Met1 is subject to Blocked amino end (Met). 4 helical regions span residues Val21 to Val34, His206 to Leu228, Lys357 to Cys376, and Ser426 to Val440.

The protein localises to the cytoplasm. The protein resides in the cytoskeleton. Acts as a cytoskeletal structure involved in the shape and motility of spiroplasmas. This is Fibril protein from Spiroplasma citri.